The chain runs to 29 residues: Dermaseptin-J9 (29 aa).

As to expression, expressed by the skin glands.

Its subcellular location is the secreted. Functionally, has antimicrobial activity. This is Dermaseptin-J9 from Phasmahyla jandaia (Jandaia leaf frog).